The chain runs to 140 residues: Putative pre-16S rRNA nuclease (140 aa).

Belongs to the YqgF nuclease family.

It localises to the cytoplasm. Its function is as follows. Could be a nuclease involved in processing of the 5'-end of pre-16S rRNA. In Halothermothrix orenii (strain H 168 / OCM 544 / DSM 9562), this protein is Putative pre-16S rRNA nuclease.